Reading from the N-terminus, the 1112-residue chain is Lacto-N-biosidase (1112 aa).

The first 34 residues, 1–34 (MEKSSNRRFGVRTVAAIVAGLMVGGMCTAMTASA), serve as a signal peptide directing secretion. The cysteines at positions 187 and 189 are disulfide-linked. Positions 190, 216, 259, 320, 321, 419, and 467 each coordinate beta-D-galactosyl-(1-&gt;3)-N-acetyl-D-glucosamine. Glu321 acts as the Proton donor/acceptor in catalysis. Cys564 and Cys589 are joined by a disulfide. Residues 938 to 969 (ATPVELTEPEQPKDNPEVTETPEATGVTVSGD) form a disordered region. The region spanning 975–1041 (ALSLKKGTTA…ANGKSASVTV (67 aa)) is the BIG2 domain. Low complexity predominate over residues 1044–1061 (TEDSEVPGPTGPTEPTKP). The segment at 1044–1081 (TEDSEVPGPTGPTEPTKPGTEKPTTKPTTKPNDGKLSA) is disordered. A helical transmembrane segment spans residues 1086-1106 (TAVLATIAALFALAGGAVVAV).

It belongs to the glycosyl hydrolase 20 family.

The protein localises to the cell membrane. It catalyses the reaction beta-D-Gal-(1-&gt;3)-beta-D-GlcNAc-(1-&gt;3)-beta-D-Gal-(1-&gt;4)-D-Glc + H2O = beta-D-galactosyl-(1-&gt;3)-N-acetyl-D-glucosamine + lactose. Present in the infant gut, this enzyme is involved in the assimilation of type-1 human milk oligosaccharides (HMOs). It hydrolyzes via a retaining mechanism the beta-D-GlcNAc-(1-&gt;3)-beta-D-Gal linkage in lacto-N-tetraose (LNT or beta-D-Gal-(1-&gt;3)-beta-D-GlcNAc-(1-&gt;3)-beta-D-Gal-(1-&gt;4)-D-Glc), an abundant HMO unique to human breast milk, releasing lacto-N-biose (LNB or beta-D-Gal-(1-&gt;3)-D-GlcNAc) and lactose. Is a key enzymatic factor for growth and proliferation of B.bifidum in the gut ecosystem of breast-fed infants. Has substrate preference for unmodified beta-linked LNB since it does not hydrolyze the fucosylated forms of lacto-N-tetraose (lacto-N-fucopentaose I and II) or lacto-N-neotetraose. Is also able to display transglycosylation activity in vitro. The protein is Lacto-N-biosidase of Bifidobacterium bifidum (strain DSM 20082 / JCM 1254 / BCRC 11844 / KCTC 3440 / E319f (Variant a)).